A 340-amino-acid chain; its full sequence is DNA-directed RNA polymerase subunit alpha (340 aa).

Residues 1–233 (MYRNWRDLIS…EQLSIFINFD (233 aa)) form an alpha N-terminal domain (alpha-NTD) region. An alpha C-terminal domain (alpha-CTD) region spans residues 251-340 (INENLYRSVD…RLRGERKDEE (90 aa)).

It belongs to the RNA polymerase alpha chain family. In terms of assembly, homodimer. The RNAP catalytic core consists of 2 alpha, 1 beta, 1 beta' and 1 omega subunit. When a sigma factor is associated with the core the holoenzyme is formed, which can initiate transcription.

The enzyme catalyses RNA(n) + a ribonucleoside 5'-triphosphate = RNA(n+1) + diphosphate. DNA-dependent RNA polymerase catalyzes the transcription of DNA into RNA using the four ribonucleoside triphosphates as substrates. The protein is DNA-directed RNA polymerase subunit alpha of Geobacter sulfurreducens (strain ATCC 51573 / DSM 12127 / PCA).